Here is a 171-residue protein sequence, read N- to C-terminus: MFDIGFSELLLVFIIGLVVLGPQRLPVAVKTVAGWIRALRSLATTVQNELTQELKLQEFQDSLKKVEKASLTNLTPELKASMDELRQAAESMKRSYVANDPEKASDEAHTIHNPVVKDNEAAHEGVTPAAAQTQASSPEQKPETTPEPVVKPAADAEPKTAAPSPSSSDKP.

The chain crosses the membrane as a helical span at residues 1 to 21 (MFDIGFSELLLVFIIGLVVLG). A disordered region spans residues 117–171 (KDNEAAHEGVTPAAAQTQASSPEQKPETTPEPVVKPAADAEPKTAAPSPSSSDKP). Positions 130-139 (AAQTQASSPE) are enriched in polar residues.

This sequence belongs to the TatB family. As to quaternary structure, the Tat system comprises two distinct complexes: a TatABC complex, containing multiple copies of TatA, TatB and TatC subunits, and a separate TatA complex, containing only TatA subunits. Substrates initially bind to the TatABC complex, which probably triggers association of the separate TatA complex to form the active translocon.

The protein resides in the cell inner membrane. Functionally, part of the twin-arginine translocation (Tat) system that transports large folded proteins containing a characteristic twin-arginine motif in their signal peptide across membranes. Together with TatC, TatB is part of a receptor directly interacting with Tat signal peptides. TatB may form an oligomeric binding site that transiently accommodates folded Tat precursor proteins before their translocation. The polypeptide is Sec-independent protein translocase protein TatB (Escherichia coli O157:H7).